A 282-amino-acid polypeptide reads, in one-letter code: NH(3)-dependent NAD(+) synthetase (282 aa).

51-58 (GISGGVDS) serves as a coordination point for ATP. Asp-57 lines the Mg(2+) pocket. Arg-148 contributes to the deamido-NAD(+) binding site. ATP is bound at residue Thr-168. Glu-173 is a binding site for Mg(2+). Deamido-NAD(+)-binding residues include Lys-181 and Asp-188. Positions 197 and 219 each coordinate ATP. 268–269 (HK) lines the deamido-NAD(+) pocket.

Belongs to the NAD synthetase family. As to quaternary structure, homodimer.

The enzyme catalyses deamido-NAD(+) + NH4(+) + ATP = AMP + diphosphate + NAD(+) + H(+). It functions in the pathway cofactor biosynthesis; NAD(+) biosynthesis; NAD(+) from deamido-NAD(+) (ammonia route): step 1/1. Its function is as follows. Catalyzes the ATP-dependent amidation of deamido-NAD to form NAD. Uses ammonia as a nitrogen source. The polypeptide is NH(3)-dependent NAD(+) synthetase (Burkholderia cenocepacia (strain ATCC BAA-245 / DSM 16553 / LMG 16656 / NCTC 13227 / J2315 / CF5610) (Burkholderia cepacia (strain J2315))).